The sequence spans 187 residues: uncharacterized protein (187 aa).

A helical transmembrane segment spans residues 8-28 (FFILLAINFILAAGFVALVLL).

Its subcellular location is the membrane. This is an uncharacterized protein from Bacillus subtilis (strain 168).